The primary structure comprises 506 residues: Galactose/methyl galactoside import ATP-binding protein MglA (506 aa).

2 ABC transporter domains span residues 14 to 249 and 264 to 506; these read LEMS…VGRS and VILE…SLHL. ATP is bound at residue 46-53; the sequence is GENGAGKS.

The protein belongs to the ABC transporter superfamily. Galactose/methyl galactoside importer (TC 3.A.1.2.3) family. The complex is composed of one ATP-binding protein (MglA), two transmembrane proteins (MglC) and a solute-binding protein (MglB).

The protein resides in the cell inner membrane. It catalyses the reaction D-galactose(out) + ATP + H2O = D-galactose(in) + ADP + phosphate + H(+). It carries out the reaction methyl beta-D-galactoside(out) + ATP + H2O = methyl beta-D-galactoside(in) + ADP + phosphate + H(+). Part of the ABC transporter complex MglABC involved in galactose/methyl galactoside import. Responsible for energy coupling to the transport system. This Shigella flexneri serotype 5b (strain 8401) protein is Galactose/methyl galactoside import ATP-binding protein MglA.